The primary structure comprises 430 residues: MTSVVVVGTQWGDEGKGKITDFLSADAEVIARYQGGDNAGHTIVIDGKKFKLHLIPSGIFFPQKISVIGNGVVVNPKSLVKELAYLHDEGVTTDNLRISDRAHVILPYHIQLDQLQEDAKGDNKIGTTIKGIGPAYMDKAARVGIRIADLLDKDIFAERLRINLAEKNRLFEKMYDSTPLDFDAIFEEYYAYGQEIKQYVTDTSVILNDALDAGKRVLFEGAQGVMLDIDQGTYPFVTSSNPVAGGVTIGSGVGPSKINKVVGVCKAYTSRVGDGPFPTELFDEVGERIREVGHEYGTTTGRPRRVGWFDSVVMRHSRRVSGITNLSLNSIDVLSGLDTVKICVAYDLDGERIDHYPASLEQLKRCKPIYEELPGWQEDITGVRSLDELPENARNYVRRVGELVGVRISTFSVGPGREQTNILESVWASI.

GTP is bound by residues 12 to 18 (GDEGKGK) and 40 to 42 (GHT). The active-site Proton acceptor is D13. Positions 13 and 40 each coordinate Mg(2+). IMP is bound by residues 13-16 (DEGK), 38-41 (NAGH), T128, R142, Q223, T238, and R302. Residue H41 is the Proton donor of the active site. 298 to 304 (TTTGRPR) serves as a coordination point for substrate. GTP contacts are provided by residues R304, 330 to 332 (SID), and 412 to 414 (SVG).

This sequence belongs to the adenylosuccinate synthetase family. In terms of assembly, homodimer. Mg(2+) is required as a cofactor.

It is found in the cytoplasm. It carries out the reaction IMP + L-aspartate + GTP = N(6)-(1,2-dicarboxyethyl)-AMP + GDP + phosphate + 2 H(+). The protein operates within purine metabolism; AMP biosynthesis via de novo pathway; AMP from IMP: step 1/2. In terms of biological role, plays an important role in the de novo pathway of purine nucleotide biosynthesis. Catalyzes the first committed step in the biosynthesis of AMP from IMP. The sequence is that of Adenylosuccinate synthetase from Streptococcus pyogenes serotype M49 (strain NZ131).